A 323-amino-acid chain; its full sequence is MTDECVTRNYGVGIRSPNGSENRGSFIMADNTDAKGCTPESLVVGGATAASPLPANKFVARMPVERYASEYNMSHKHRGVALIFNHEFFDIPSLKSRTGTNVDAQELKKAFENLGFAVSVHKDCKLRDILKHVGKAAELDHTDNDCLAVAILSHGEHGYLYAKDTQYKLDNIWHYFTATFCPSLAGKPKLFFIQACQGDRLDGGITLEKGVTETDGESSTSYKIPIHADFLFSYSTIPGYFSWRNINNGSWYMQSLIRELNANGKKYDLLTLLTFVNQRVALDFESNVPATPMMDRQKQIPCLTSMLTRILRFGDKPNGNKAG.

Residues 1 to 33 (MTDECVTRNYGVGIRSPNGSENRGSFIMADNTD) constitute a propeptide that is removed on maturation. Catalysis depends on residues H154 and C196. A propeptide spanning residues 203–215 (GGITLEKGVTETD) is cleaved from the precursor.

Belongs to the peptidase C14A family. As to quaternary structure, heterotetramer that consists of two anti-parallel arranged heterodimers, each one formed by a 22 kDa (p22) and a 13 kDa (p13) subunit.

Involved in the activation cascade of caspases responsible for apoptosis execution. Proteolytically cleaves poly(ADP-ribose) polymerase (PARP). Loss of zygotic DCP-1 function causes larval lethality and melanotic tumors. The chain is Caspase-1 (Dcp-1) from Drosophila melanogaster (Fruit fly).